Consider the following 518-residue polypeptide: Glutamate--cysteine ligase (518 aa).

The protein belongs to the glutamate--cysteine ligase type 1 family. Type 1 subfamily.

The catalysed reaction is L-cysteine + L-glutamate + ATP = gamma-L-glutamyl-L-cysteine + ADP + phosphate + H(+). The protein operates within sulfur metabolism; glutathione biosynthesis; glutathione from L-cysteine and L-glutamate: step 1/2. The protein is Glutamate--cysteine ligase of Salmonella arizonae (strain ATCC BAA-731 / CDC346-86 / RSK2980).